The following is a 181-amino-acid chain: Large ribosomal subunit protein uL5 (181 aa).

The protein belongs to the universal ribosomal protein uL5 family. Part of the 50S ribosomal subunit; part of the 5S rRNA/L5/L18/L25 subcomplex. Contacts the 5S rRNA and the P site tRNA. Forms a bridge to the 30S subunit in the 70S ribosome.

Its function is as follows. This is one of the proteins that bind and probably mediate the attachment of the 5S RNA into the large ribosomal subunit, where it forms part of the central protuberance. In the 70S ribosome it contacts protein S13 of the 30S subunit (bridge B1b), connecting the 2 subunits; this bridge is implicated in subunit movement. Contacts the P site tRNA; the 5S rRNA and some of its associated proteins might help stabilize positioning of ribosome-bound tRNAs. This is Large ribosomal subunit protein uL5 from Clostridium kluyveri (strain NBRC 12016).